The following is a 141-amino-acid chain: Nucleoside diphosphate kinase (141 aa).

The ATP site is built by Lys11, Phe59, Arg87, Thr93, Arg104, and Asn114. His117 acts as the Pros-phosphohistidine intermediate in catalysis.

Belongs to the NDK family. In terms of assembly, homotetramer. Requires Mg(2+) as cofactor.

Its subcellular location is the cytoplasm. The catalysed reaction is a 2'-deoxyribonucleoside 5'-diphosphate + ATP = a 2'-deoxyribonucleoside 5'-triphosphate + ADP. It carries out the reaction a ribonucleoside 5'-diphosphate + ATP = a ribonucleoside 5'-triphosphate + ADP. Its function is as follows. Major role in the synthesis of nucleoside triphosphates other than ATP. The ATP gamma phosphate is transferred to the NDP beta phosphate via a ping-pong mechanism, using a phosphorylated active-site intermediate. This is Nucleoside diphosphate kinase from Alkalilimnicola ehrlichii (strain ATCC BAA-1101 / DSM 17681 / MLHE-1).